The following is a 360-amino-acid chain: Phosphoserine aminotransferase (360 aa).

R42 contacts L-glutamate. Residues W102, T152, D171, and Q194 each coordinate pyridoxal 5'-phosphate. K195 bears the N6-(pyridoxal phosphate)lysine mark. 237–238 (NT) is a pyridoxal 5'-phosphate binding site.

Belongs to the class-V pyridoxal-phosphate-dependent aminotransferase family. SerC subfamily. As to quaternary structure, homodimer. Requires pyridoxal 5'-phosphate as cofactor.

Its subcellular location is the cytoplasm. The enzyme catalyses O-phospho-L-serine + 2-oxoglutarate = 3-phosphooxypyruvate + L-glutamate. It carries out the reaction 4-(phosphooxy)-L-threonine + 2-oxoglutarate = (R)-3-hydroxy-2-oxo-4-phosphooxybutanoate + L-glutamate. It functions in the pathway amino-acid biosynthesis; L-serine biosynthesis; L-serine from 3-phospho-D-glycerate: step 2/3. Its pathway is cofactor biosynthesis; pyridoxine 5'-phosphate biosynthesis; pyridoxine 5'-phosphate from D-erythrose 4-phosphate: step 3/5. Catalyzes the reversible conversion of 3-phosphohydroxypyruvate to phosphoserine and of 3-hydroxy-2-oxo-4-phosphonooxybutanoate to phosphohydroxythreonine. This is Phosphoserine aminotransferase from Coxiella burnetii (strain Dugway 5J108-111).